Reading from the N-terminus, the 625-residue chain is Thioredoxin domain-containing protein 6 (625 aa).

Positions 158–302 are NDK; that stretch reads KSYTVAIIKP…FFFPNFKISN (145 aa). A disordered region spans residues 594-625; sequence GETPETSASDISRNAAAQGDDPEQDESKEMEE. Over residues 613 to 625 the composition is skewed to acidic residues; the sequence is DDPEQDESKEMEE.

This sequence belongs to the NDK family. Monomer and homodimer.

Its subcellular location is the cytoplasm. It is found in the cytoskeleton. The protein resides in the cilium axoneme. The protein localises to the dynein axonemal particle. May be a regulator of microtubule physiology. The chain is Thioredoxin domain-containing protein 6 from Xenopus laevis (African clawed frog).